The following is a 248-amino-acid chain: MEWTDDGIVLGLRRHGESSAVVELLTREHGRHLGLVRGAAGKRMRPVLQPGNTVRAIWRARLDEHLGMYAVDGLTLRAAELMSASHGAYGVTHLASLARLLPERDPHEDMYFRLEHALDDFADAGAAAAHIVRFELAILTELGFGLDLESCAATGETSDLIYVSPKSGGAVSRTAGAPWADRLLPLPPFLRESDEDHGWSDQDLLDGFRLTGLFLLRHVLEPRGQGHSDAREGFINAVTRARTRLTRA.

Belongs to the RecO family.

Functionally, involved in DNA repair and RecF pathway recombination. The polypeptide is DNA repair protein RecO (Bradyrhizobium sp. (strain ORS 278)).